Consider the following 724-residue polypeptide: Putative mediator of RNA polymerase II transcription subunit 1 (724 aa).

Disordered regions lie at residues 33–52 (SQQQ…VTSN), 147–167 (QQQQ…PLVE), and 486–524 (HRSS…NENG). Residues 140–200 (YLNQQKEQQQ…QEMTNELNNK (61 aa)) are a coiled coil. 2 stretches are compositionally biased toward low complexity: residues 147–164 (QQQQ…QPQP) and 488–510 (SSQQ…QQQQ). A compositionally biased stretch (polar residues) spans 511–524 (KKLNSVDESMNENG).

It belongs to the Mediator complex subunit 1 family. As to quaternary structure, component of the Mediator complex.

Its subcellular location is the nucleus. Functionally, component of the Mediator complex, a coactivator involved in the regulated transcription of nearly all RNA polymerase II-dependent genes. Mediator functions as a bridge to convey information from gene-specific regulatory proteins to the basal RNA polymerase II transcription machinery. Mediator is recruited to promoters by direct interactions with regulatory proteins and serves as a scaffold for the assembly of a functional preinitiation complex with RNA polymerase II and the general transcription factors. This Dictyostelium discoideum (Social amoeba) protein is Putative mediator of RNA polymerase II transcription subunit 1 (med1).